The primary structure comprises 72 residues: Translation initiation factor IF-1 (72 aa).

The S1-like domain occupies 1–72 (MAKEDNIEMQ…SKGRIVFRSR (72 aa)).

Belongs to the IF-1 family. As to quaternary structure, component of the 30S ribosomal translation pre-initiation complex which assembles on the 30S ribosome in the order IF-2 and IF-3, IF-1 and N-formylmethionyl-tRNA(fMet); mRNA recruitment can occur at any time during PIC assembly.

Its subcellular location is the cytoplasm. One of the essential components for the initiation of protein synthesis. Stabilizes the binding of IF-2 and IF-3 on the 30S subunit to which N-formylmethionyl-tRNA(fMet) subsequently binds. Helps modulate mRNA selection, yielding the 30S pre-initiation complex (PIC). Upon addition of the 50S ribosomal subunit IF-1, IF-2 and IF-3 are released leaving the mature 70S translation initiation complex. This is Translation initiation factor IF-1 from Shewanella pealeana (strain ATCC 700345 / ANG-SQ1).